We begin with the raw amino-acid sequence, 201 residues long: Potassium-transporting ATPase KdpC subunit (201 aa).

Residues 17 to 37 (LLTGLAYPLAMTGLAGILFPV) form a helical membrane-spanning segment.

This sequence belongs to the KdpC family. The system is composed of three essential subunits: KdpA, KdpB and KdpC.

Its subcellular location is the cell inner membrane. Functionally, part of the high-affinity ATP-driven potassium transport (or Kdp) system, which catalyzes the hydrolysis of ATP coupled with the electrogenic transport of potassium into the cytoplasm. This subunit acts as a catalytic chaperone that increases the ATP-binding affinity of the ATP-hydrolyzing subunit KdpB by the formation of a transient KdpB/KdpC/ATP ternary complex. In Methylobacterium nodulans (strain LMG 21967 / CNCM I-2342 / ORS 2060), this protein is Potassium-transporting ATPase KdpC subunit.